We begin with the raw amino-acid sequence, 112 residues long: Diuretic hormone class 2 (112 aa).

The N-terminal stretch at 1–24 (MVRATCLLASCVLFALLLIVPASA) is a signal peptide. A propeptide spanning residues 25-71 (YPRYPSNYFREEGQYEPEEIMDMLNRLGNLIQMERKMENYKEDITSE) is cleaved from the precursor. Pro104 is modified (proline amide). The propeptide occupies 108 to 112 (RRDAH).

As to expression, expressed in corpora cardiaca (CC), corpora allata (CA), antennal lobe (AL) and gnathal ganglion (GNG) (at protein level). Expression in CC, CA and AL detected in most animals, expression in GNG in few animals (at protein level).

It localises to the secreted. Regulation of fluid secretion. Stimulates Malpighian tubule fluid secretion. The chain is Diuretic hormone class 2 from Agrotis ipsilon (Black cutworm moth).